We begin with the raw amino-acid sequence, 535 residues long: Phosphoenolpyruvate carboxykinase (ATP) (535 aa).

Arg59, Tyr201, and Lys207 together coordinate substrate. Residues Lys207, His226, and 243 to 251 (GLSGTGKTT) contribute to the ATP site. Residues Lys207 and His226 each coordinate Mn(2+). Position 264 (Asp264) interacts with Mn(2+). Residues Glu292, Arg328, 444-445 (RI), and Thr450 contribute to the ATP site. Position 328 (Arg328) interacts with substrate.

The protein belongs to the phosphoenolpyruvate carboxykinase (ATP) family. It depends on Mn(2+) as a cofactor.

The protein resides in the cytoplasm. It catalyses the reaction oxaloacetate + ATP = phosphoenolpyruvate + ADP + CO2. The protein operates within carbohydrate biosynthesis; gluconeogenesis. Its function is as follows. Involved in the gluconeogenesis. Catalyzes the conversion of oxaloacetate (OAA) to phosphoenolpyruvate (PEP) through direct phosphoryl transfer between the nucleoside triphosphate and OAA. The protein is Phosphoenolpyruvate carboxykinase (ATP) of Bacteroides thetaiotaomicron (strain ATCC 29148 / DSM 2079 / JCM 5827 / CCUG 10774 / NCTC 10582 / VPI-5482 / E50).